The sequence spans 612 residues: Dihydroxy-acid dehydratase (612 aa).

A Mg(2+)-binding site is contributed by aspartate 81. Cysteine 122 contributes to the [2Fe-2S] cluster binding site. Residues aspartate 123 and lysine 124 each contribute to the Mg(2+) site. At lysine 124 the chain carries N6-carboxylysine. Residue cysteine 195 participates in [2Fe-2S] cluster binding. Mg(2+) is bound at residue glutamate 491. Serine 517 functions as the Proton acceptor in the catalytic mechanism.

Belongs to the IlvD/Edd family. Homodimer. [2Fe-2S] cluster serves as cofactor. Mg(2+) is required as a cofactor.

It carries out the reaction (2R)-2,3-dihydroxy-3-methylbutanoate = 3-methyl-2-oxobutanoate + H2O. The enzyme catalyses (2R,3R)-2,3-dihydroxy-3-methylpentanoate = (S)-3-methyl-2-oxopentanoate + H2O. Its pathway is amino-acid biosynthesis; L-isoleucine biosynthesis; L-isoleucine from 2-oxobutanoate: step 3/4. The protein operates within amino-acid biosynthesis; L-valine biosynthesis; L-valine from pyruvate: step 3/4. In terms of biological role, functions in the biosynthesis of branched-chain amino acids. Catalyzes the dehydration of (2R,3R)-2,3-dihydroxy-3-methylpentanoate (2,3-dihydroxy-3-methylvalerate) into 2-oxo-3-methylpentanoate (2-oxo-3-methylvalerate) and of (2R)-2,3-dihydroxy-3-methylbutanoate (2,3-dihydroxyisovalerate) into 2-oxo-3-methylbutanoate (2-oxoisovalerate), the penultimate precursor to L-isoleucine and L-valine, respectively. The protein is Dihydroxy-acid dehydratase of Haemophilus influenzae (strain 86-028NP).